The chain runs to 571 residues: Endonuclease/exonuclease/phosphatase family domain-containing protein 1 (571 aa).

The tract at residues 1–20 is disordered; sequence MGSTLGCHRSIPRDPSDLSH. Residue glycine 2 is the site of N-myristoyl glycine attachment. The segment covering 11–20 has biased composition (basic and acidic residues); sequence IPRDPSDLSH. Phosphoserine is present on residues serine 16, serine 21, and serine 25. In terms of domain architecture, HhH spans 38–67; the sequence is ERLNINTATEEELMTLPGVTRAVARSIVEY. Serine 106, serine 110, serine 162, and serine 175 each carry phosphoserine. The interval 202-227 is disordered; sequence SRPPSTHTNGGLTFTAKPHPSPTSLS. A compositionally biased stretch (polar residues) spans 204–213; that stretch reads PPSTHTNGGL. A Phosphothreonine modification is found at threonine 267. Serine 430 carries the post-translational modification Phosphoserine. A disordered region spans residues 548-571; sequence RKEGPRSGNGLTLERSEANIKHER. Residues 561–571 are compositionally biased toward basic and acidic residues; that stretch reads ERSEANIKHER.

The polypeptide is Endonuclease/exonuclease/phosphatase family domain-containing protein 1 (EEPD1) (Bos taurus (Bovine)).